Here is a 284-residue protein sequence, read N- to C-terminus: 4-diphosphocytidyl-2-C-methyl-D-erythritol kinase (284 aa).

K14 is an active-site residue. 98–108 (PMGGGLGGGSS) is a binding site for ATP. Residue D140 is part of the active site.

Belongs to the GHMP kinase family. IspE subfamily.

It catalyses the reaction 4-CDP-2-C-methyl-D-erythritol + ATP = 4-CDP-2-C-methyl-D-erythritol 2-phosphate + ADP + H(+). Its pathway is isoprenoid biosynthesis; isopentenyl diphosphate biosynthesis via DXP pathway; isopentenyl diphosphate from 1-deoxy-D-xylulose 5-phosphate: step 3/6. Functionally, catalyzes the phosphorylation of the position 2 hydroxy group of 4-diphosphocytidyl-2C-methyl-D-erythritol. The sequence is that of 4-diphosphocytidyl-2-C-methyl-D-erythritol kinase from Shewanella sp. (strain W3-18-1).